Consider the following 610-residue polypeptide: Sensor protein kinase WalK (610 aa).

2 consecutive transmembrane segments (helical) span residues 14–34 (LVIV…LYFT) and 184–204 (IFIV…FFIA). The HAMP domain maps to 205-257 (RTITKPITDMRNQTVEMSKGNYTQRVKIYGNDEIGELALAFNNLSKRVQEAQA). Positions 262–333 (EKRRLDSVIT…IQENNDSFLL (72 aa)) constitute a PAS domain. The 54-residue stretch at 326–379 (ENNDSFLLDINENEGIIARVNFSTIVQETGFVTGYIAVLHDVTEQQQVERERRE) folds into the PAC domain. Residues 383-601 (NVSHELRTPL…SIFITLPCEV (219 aa)) form the Histidine kinase domain. A Phosphohistidine; by autocatalysis modification is found at histidine 386.

Autophosphorylated.

The protein resides in the cell membrane. The enzyme catalyses ATP + protein L-histidine = ADP + protein N-phospho-L-histidine.. Member of the two-component regulatory system WalK/WalR. WalK functions as a sensor protein kinase which is autophosphorylated at a histidine residue and transfers its phosphate group to WalR. In Staphylococcus saprophyticus subsp. saprophyticus (strain ATCC 15305 / DSM 20229 / NCIMB 8711 / NCTC 7292 / S-41), this protein is Sensor protein kinase WalK (walK).